Here is a 150-residue protein sequence, read N- to C-terminus: Monothiol glutaredoxin-S13 (150 aa).

The tract at residues 30–52 is disordered; the sequence is PSSSSSSLSWLTSGSPKPTSISN. Low complexity predominate over residues 31–44; the sequence is SSSSSSLSWLTSGS. Positions 53–149 constitute a Glutaredoxin domain; the sequence is KRSSNLVVME…PTLRQAGALW (97 aa). Position 73 (Cys73) interacts with [2Fe-2S] cluster. The Responsive for interaction with TGA factors motif lies at 147 to 150; it reads ALWL.

The protein belongs to the glutaredoxin family. CC-type subfamily.

It localises to the cytoplasm. The protein localises to the nucleus. Functionally, may only reduce GSH-thiol disulfides, but not protein disulfides. This Arabidopsis thaliana (Mouse-ear cress) protein is Monothiol glutaredoxin-S13 (GRXS13).